Reading from the N-terminus, the 174-residue chain is Crossover junction endodeoxyribonuclease RuvC (174 aa).

Residues aspartate 8, glutamate 67, and aspartate 139 contribute to the active site. Mg(2+) is bound by residues aspartate 8, glutamate 67, and aspartate 139.

Belongs to the RuvC family. Homodimer which binds Holliday junction (HJ) DNA. The HJ becomes 2-fold symmetrical on binding to RuvC with unstacked arms; it has a different conformation from HJ DNA in complex with RuvA. In the full resolvosome a probable DNA-RuvA(4)-RuvB(12)-RuvC(2) complex forms which resolves the HJ. The cofactor is Mg(2+).

It is found in the cytoplasm. The catalysed reaction is Endonucleolytic cleavage at a junction such as a reciprocal single-stranded crossover between two homologous DNA duplexes (Holliday junction).. Its function is as follows. The RuvA-RuvB-RuvC complex processes Holliday junction (HJ) DNA during genetic recombination and DNA repair. Endonuclease that resolves HJ intermediates. Cleaves cruciform DNA by making single-stranded nicks across the HJ at symmetrical positions within the homologous arms, yielding a 5'-phosphate and a 3'-hydroxyl group; requires a central core of homology in the junction. The consensus cleavage sequence is 5'-(A/T)TT(C/G)-3'. Cleavage occurs on the 3'-side of the TT dinucleotide at the point of strand exchange. HJ branch migration catalyzed by RuvA-RuvB allows RuvC to scan DNA until it finds its consensus sequence, where it cleaves and resolves the cruciform DNA. This is Crossover junction endodeoxyribonuclease RuvC from Pseudomonas putida (strain ATCC 47054 / DSM 6125 / CFBP 8728 / NCIMB 11950 / KT2440).